Here is a 172-residue protein sequence, read N- to C-terminus: Diphosphoinositol polyphosphate phosphohydrolase 1 (172 aa).

Met-1 is modified (N-acetylmethionine). Substrate-binding positions include Arg-10, 18–20 (KKR), and 39–41 (SSR). One can recognise a Nudix hydrolase domain in the interval 17–144 (YKKRAACLCF…VQASYFETLR (128 aa)). Gly-50 and Glu-66 together coordinate Mg(2+). Residues 51-72 (GGMEPEEEPGTAAVREVCEEAG) carry the Nudix box motif. Glu-69 (proton acceptor) is an active-site residue. Position 70 (Glu-70) interacts with Mg(2+). Residues 89 to 91 (RKH), Arg-115, and Lys-133 each bind substrate.

Belongs to the Nudix hydrolase family. DIPP subfamily. Monomer. The cofactor is Mg(2+). Mn(2+) is required as a cofactor. Requires Zn(2+) as cofactor.

It localises to the cytoplasm. The protein resides in the nucleus. The catalysed reaction is diphospho-myo-inositol polyphosphate + H2O = myo-inositol polyphosphate + phosphate.. It carries out the reaction 5-diphospho-1D-myo-inositol 1,2,3,4,6-pentakisphosphate + H2O = 1D-myo-inositol hexakisphosphate + phosphate + H(+). The enzyme catalyses 3,5-bis(diphospho)-1D-myo-inositol 1,2,4,6-tetrakisphosphate + H2O = 3-diphospho-1D-myo-inositol 1,2,4,5,6-pentakisphosphate + phosphate + 2 H(+). It catalyses the reaction [phosphate](n+1) + n H2O = (n+1) phosphate + n H(+). The catalysed reaction is P(1),P(5)-bis(5'-adenosyl) pentaphosphate + H2O = ADP + ATP + 2 H(+). It carries out the reaction P(1),P(6)-bis(5'-adenosyl) hexaphosphate + H2O = 2 ATP + 2 H(+). The enzyme catalyses P(1),P(4)-bis(5'-adenosyl) tetraphosphate + H2O = AMP + ATP + 2 H(+). It catalyses the reaction a 5'-end (N(7)-methyl 5'-triphosphoguanosine)-ribonucleoside in mRNA + H2O = N(7)-methyl-GMP + a 5'-end diphospho-ribonucleoside in mRNA + 2 H(+). The catalysed reaction is a 5'-end (N(7)-methyl 5'-triphosphoguanosine)-ribonucleoside in mRNA + H2O = N(7)-methyl-GDP + a 5'-end phospho-ribonucleoside in mRNA + 2 H(+). Cleaves a beta-phosphate from the diphosphate groups in PP-InsP5 (diphosphoinositol pentakisphosphate) and [PP]2-InsP4 (bisdiphosphoinositol tetrakisphosphate), suggesting that it may play a role in signal transduction. InsP6 (inositol hexakisphosphate) is not a substrate. Also able to catalyze the hydrolysis of dinucleoside oligophosphates, with diadenosine 5',5'''-P1,P6-hexaphosphate (Ap6A) and diadenosine 5',5'''- P1,P5-pentaphosphate (Ap5A) being the preferred substrates. The major reaction products are ADP and p4a from Ap6A and ADP and ATP from Ap5A. Also able to hydrolyze 5- phosphoribose 1-diphosphate. Acts as a decapping enzyme that can hydrolyze both monomethylated and unmethylated capped RNAs. Hydrolyzes monomethylated capped RNA after both the alpha- and beta-phosphates generating m7GMP + ppRNA and m7GDP + pRNA. Modulates the stability of a subset of mRNAs implicated in cell motility. Divalent cations zinc, magnesium and manganese determine its substrate specificity. Exhibits diphosphoinositol polyphosphate phosphohydrolase in the presence of magnesium ions, diadenosine hexaphosphate hydrolase activity in the presence of manganese ions and endopolyphosphatase activity in the presence of zinc ions. Plays an important role in limiting DNA damage and maintaining cell survival upon oxidative stress via its endopolyphosphatase activity. The protein is Diphosphoinositol polyphosphate phosphohydrolase 1 of Bos taurus (Bovine).